Here is a 293-residue protein sequence, read N- to C-terminus: MTSALHESSIKSLPLLGRGKVRDMYAVGDDKLLIVASDRISAFDVILDDPIPGKGQVLTELTDFWLRKLAHILPNHSTGIQPEDVVAPDEVDQVRGRAVVVKRLKPILVEAVARGYLIGSGWKDYQASGSVCGIALPAGLQQASQLPEPIFTPAAKAEFGMHDENVDFAHVVKEVGQEMAERIRDVTLRLYGEAARFAATKGIIIADTKFEFGLDDNGTLHLMDEVLTPDSSRFWPADGYRVGISPPSFDKQFVRDWLETQPWDKTPPAPRLPRDVLEKTAAKYREALDRLLA.

It belongs to the SAICAR synthetase family.

It catalyses the reaction 5-amino-1-(5-phospho-D-ribosyl)imidazole-4-carboxylate + L-aspartate + ATP = (2S)-2-[5-amino-1-(5-phospho-beta-D-ribosyl)imidazole-4-carboxamido]succinate + ADP + phosphate + 2 H(+). It functions in the pathway purine metabolism; IMP biosynthesis via de novo pathway; 5-amino-1-(5-phospho-D-ribosyl)imidazole-4-carboxamide from 5-amino-1-(5-phospho-D-ribosyl)imidazole-4-carboxylate: step 1/2. This Bordetella parapertussis (strain 12822 / ATCC BAA-587 / NCTC 13253) protein is Phosphoribosylaminoimidazole-succinocarboxamide synthase.